The primary structure comprises 349 residues: Replication-associated protein (349 aa).

The CRESS-DNA virus Rep endonuclease domain maps to 8-116 (RLNAKNYFLT…DGDTVEWGEF (109 aa)). The short motif at 15–18 (FLTY) is the RCR-1 element. A divalent metal cation-binding residues include Glu49, His57, and His59. An RCR-2 motif is present at residues 57-59 (HLH). Catalysis depends on Tyr103, which acts as the For DNA cleavage activity. An RCR-3 motif is present at residues 103 to 106 (YIDK). Asp107 contributes to the a divalent metal cation binding site. Residues 143 to 153 (AEEALQIIKEE) are binding to RBR1. The interval 156–176 (QHFFLQFHNIVSNANRIFQTP) is oligomerization. 221 to 228 (GPSRTGKT) lines the ATP pocket.

This sequence belongs to the geminiviridae Rep protein family. Homooligomer. Interacts with the replication enhancer protein (REn). Interacts with host retinoblastoma-related protein 1 (RBR1), and may thereby induce the transcription of host replicative enzymes even if the cell is not dividing anymore. Interacts with host PCNA. Interacts with host SCE1 protein. It depends on Mg(2+) as a cofactor. Requires Mn(2+) as cofactor.

The protein resides in the host nucleus. In terms of biological role, essential for the replication of viral ssDNA. The closed circular ssDNA genome is first converted to a superhelical dsDNA. Rep binds a specific region at the genome origin of replication. It introduces an endonucleolytic nick within the conserved sequence 5'-TAATATTAC-3' in the intergenic region of the genome present in all geminiviruses, thereby initiating the rolling circle replication (RCR). Following cleavage, binds covalently to the 5'-phosphate of DNA as a tyrosyl ester. The cleavage gives rise to a free 3'-OH that serves as a primer for the cellular DNA polymerase. The polymerase synthesizes the (+) strand DNA by rolling circle mechanism. After one round of replication, a Rep-catalyzed nucleotidyl transfer reaction releases a circular single-stranded virus genome, thereby terminating the replication. Displays origin-specific DNA cleavage, nucleotidyl transferase, ATPase and helicase activities. This is Replication-associated protein from Capsicum annuum (Capsicum pepper).